Reading from the N-terminus, the 674-residue chain is Probable copper-transporting P-type ATPase B (674 aa).

Residues 1-22 (MNHSNQMHHDNHESHNHHSGHA) are disordered. Residues 7–16 (MHHDNHESHN) are compositionally biased toward basic and acidic residues. Transmembrane regions (helical) follow at residues 32–52 (FFVS…MGIN), 57–77 (FTFP…FFYG), 95–115 (GMMT…LYAF), 127–147 (TMDF…GHWI), 284–304 (GYLF…WMLI), and 315–335 (LVTV…PLVT). Asp-367 functions as the 4-aspartylphosphate intermediate in the catalytic mechanism. Mg(2+) is bound by residues Asp-565 and Asp-569. 2 consecutive transmembrane segments (helical) span residues 623 to 645 (LWWG…AFVG) and 649 to 671 (SPAV…AFTL).

Belongs to the cation transport ATPase (P-type) (TC 3.A.3) family. Type IB subfamily.

The protein localises to the cell membrane. It carries out the reaction Cu(+)(in) + ATP + H2O = Cu(+)(out) + ADP + phosphate + H(+). In terms of biological role, involved in copper transport. The chain is Probable copper-transporting P-type ATPase B (copB) from Staphylococcus epidermidis (strain ATCC 12228 / FDA PCI 1200).